The primary structure comprises 687 residues: Homeobox-leucine zipper protein HDG12 (687 aa).

Residues 1–32 (MEFLGDSQNHDSSETEKKNKKKKRFHRHTPHQ) form a disordered region. A compositionally biased stretch (basic and acidic residues) spans 8–17 (QNHDSSETEK). The span at 18–30 (KNKKKKRFHRHTP) shows a compositional bias: basic residues. The segment at residues 21-80 (KKKRFHRHTPHQIQRLESTFNECQHPDEKQRNQLSRELGLAPRQIKFWFQNRRTQKKAQH) is a DNA-binding region (homeobox). A coiled-coil region spans residues 87–150 (ALKEENDKIR…LERVSSIAAK (64 aa)). Positions 206 to 440 (SEMDKSLMTN…LQRMCERFTN (235 aa)) constitute an START domain.

Belongs to the HD-ZIP homeobox family. Class IV subfamily. In terms of assembly, interacts with BBM. In terms of tissue distribution, expressed in apical meristems and young epidermal tissue including trichomes and stipules. Expressed in lateral root tips, the L1 layer of apical inflorescence meristems and early flower primordia, carpel and stamen filament epidermis, stigma papillae, ovule primordia, nucellus and embryo.

It localises to the nucleus. In terms of biological role, probable transcription factor that acts as a negative regulator of trichome branching in association with HDG11. Seems to promote cell differentiation. May regulate cell differentiation and proliferation during root and shoot meristem development. Acts as a positive regulator of SCL18/LAS expression. Involved, together with PDF2, in the regulation of flower organs development by promoting the expression of APETALA 3 (AP3) in the epidermis and internal cell layers of developing flowers. The chain is Homeobox-leucine zipper protein HDG12 from Arabidopsis thaliana (Mouse-ear cress).